A 100-amino-acid polypeptide reads, in one-letter code: MSVEKALKDLVKTGVYAMGFKQSLKAVKAGEAKAIVIAENTPPELRRKLEYYAKLAGIPIIVYRGTRMDMGLVMGRRHGVSVLAVIDEGSSRILEQAEEA.

It belongs to the eukaryotic ribosomal protein eL30 family.

In Aeropyrum pernix (strain ATCC 700893 / DSM 11879 / JCM 9820 / NBRC 100138 / K1), this protein is Large ribosomal subunit protein eL30 (rpl30e).